A 316-amino-acid polypeptide reads, in one-letter code: Bifunctional peptidase and (3S)-lysyl hydroxylase Jmjd7 (316 aa).

Positions 128-307 (VQKQCSNLPT…LKYSYFQLMD (180 aa)) constitute a JmjC domain. Fe cation is bound by residues His-178, Asp-180, and His-277.

As to quaternary structure, homodimer; disulfide-linked. Interacts with DRG1 and DRG2. It depends on Fe(2+) as a cofactor.

Its subcellular location is the nucleus. The protein localises to the cytoplasm. The enzyme catalyses L-lysyl-[protein] + 2-oxoglutarate + O2 = (3S)-3-hydroxy-L-lysyl-[protein] + succinate + CO2. In terms of biological role, bifunctional enzyme that acts both as an endopeptidase and 2-oxoglutarate-dependent monooxygenase. Endopeptidase that cleaves histones N-terminal tails at the carboxyl side of methylated arginine or lysine residues, to generate 'tailless nucleosomes', which may trigger transcription elongation. Preferentially recognizes and cleaves monomethylated and dimethylated arginine residues of histones H2, H3 and H4. After initial cleavage, continues to digest histones tails via its aminopeptidase activity. Additionally, may play a role in protein biosynthesis by modifying the translation machinery. Acts as a Fe(2+) and 2-oxoglutarate-dependent monooxygenase, catalyzing (S)-stereospecific hydroxylation at C-3 of 'Lys-22' of DRG1 and 'Lys-21' of DRG2 translation factors (TRAFAC), promoting their interaction with ribonucleic acids (RNA). The sequence is that of Bifunctional peptidase and (3S)-lysyl hydroxylase Jmjd7 from Mus musculus (Mouse).